A 144-amino-acid polypeptide reads, in one-letter code: Large ribosomal subunit protein uL15 (144 aa).

Residues 1–53 (MRLNTLSPAEGAKHSAKRLGRGIGSGLGKTGGRGHKGQKSRTGGGVRRGFEGG) form a disordered region. Over residues 21 to 31 (RGIGSGLGKTG) the composition is skewed to gly residues.

The protein belongs to the universal ribosomal protein uL15 family. Part of the 50S ribosomal subunit.

Its function is as follows. Binds to the 23S rRNA. This is Large ribosomal subunit protein uL15 from Haemophilus influenzae (strain ATCC 51907 / DSM 11121 / KW20 / Rd).